The sequence spans 59 residues: Small ribosomal subunit protein bS21A (59 aa).

It belongs to the bacterial ribosomal protein bS21 family.

This is Small ribosomal subunit protein bS21A from Gloeobacter violaceus (strain ATCC 29082 / PCC 7421).